A 256-amino-acid polypeptide reads, in one-letter code: MALSCSKVLTFSLSSVVGGDDAKKKLSLCSSSSLSASVNGGGSRNMRVCAAASNAPAPLTGVIFEPFQELKKDYLAVPIAPNVSLSRQNYSDEAEAAINEQINVEYNVSYVYHSLFAYFDRDNIALKGLAKFFKESSEEEREHAEKLIKYQNIRGGRVVLHPITSPPSEFEHPEKGDALYAMELALSLEKLTNEKLLYVHSVADRNNDAQLADFIESEFLNEQVESIKKIAEYVTQLRLVGKGHGVWHFDQRLLHD.

The transit peptide at 1–54 (MALSCSKVLTFSLSSVVGGDDAKKKLSLCSSSSLSASVNGGGSRNMRVCAAASN) directs the protein to the chloroplast. Residues 55–87 (APAPLTGVIFEPFQELKKDYLAVPIAPNVSLSR) form an extension peptide (EP) region. One can recognise a Ferritin-like diiron domain in the interval 88 to 241 (QNYSDEAEAA…EYVTQLRLVG (154 aa)). Fe cation-binding residues include E105, E140, H143, E189, and Q223.

This sequence belongs to the ferritin family. Oligomer of 24 subunits. There are two types of subunits: L (light) chain and H (heavy) chain. The major chain can be light or heavy, depending on the species and tissue type. The functional molecule forms a roughly spherical shell with a diameter of 12 nm and contains a central cavity into which the insoluble mineral iron core is deposited.

The protein resides in the plastid. It is found in the chloroplast. The enzyme catalyses 4 Fe(2+) + O2 + 4 H(+) = 4 Fe(3+) + 2 H2O. Its function is as follows. Stores iron in a soluble, non-toxic, readily available form. Important for iron homeostasis. Has ferroxidase activity. Iron is taken up in the ferrous form and deposited as ferric hydroxides after oxidation. The chain is Ferritin-3, chloroplastic from Vigna unguiculata (Cowpea).